Here is a 96-residue protein sequence, read N- to C-terminus: Non-specific lipid-transfer protein 2 (96 aa).

The first 27 residues, 1–27 (MMRRLAVLVLAVAMVAACGGGVVGVAG), serve as a signal peptide directing secretion. Disulfide bonds link Cys-30/Cys-62, Cys-38/Cys-52, Cys-53/Cys-88, and Cys-64/Cys-95.

Belongs to the plant LTP family. B11E subfamily.

In terms of biological role, transfer lipids across membranes. May play a role in plant defense or in the biosynthesis of cuticle layers. This Oryza sativa subsp. indica (Rice) protein is Non-specific lipid-transfer protein 2 (LTP-2).